The sequence spans 146 residues: Large ribosomal subunit protein uL15 (146 aa).

The interval 1–53 is disordered; the sequence is MILSNLKPVPGARHSKKRLGRGPGSGTGKTSGKGHKGQKARSGGGVRPGFEGG. 2 stretches are compositionally biased toward gly residues: residues 21–31 and 42–52; these read RGPGSGTGKTS and SGGGVRPGFEG.

Belongs to the universal ribosomal protein uL15 family. In terms of assembly, part of the 50S ribosomal subunit.

In terms of biological role, binds to the 23S rRNA. This chain is Large ribosomal subunit protein uL15, found in Acholeplasma laidlawii (strain PG-8A).